A 735-amino-acid polypeptide reads, in one-letter code: Ethylene receptor 1 (735 aa).

The next 3 membrane-spanning stretches (helical) occupy residues 23–43, 54–74, and 92–112; these read ISDF…IYFV, VLVQ…INLW, and VLTA…IPDL. Cu cation contacts are provided by Cys65 and His69. In terms of domain architecture, GAF spans 158 to 307; it reads DRHTILKTTL…VVADQVAVAL (150 aa). The Histidine kinase domain maps to 350–586; the sequence is VMNHEMRTPM…IFDVKLAISN (237 aa). His353 bears the Phosphohistidine; by autocatalysis mark. The 118-residue stretch at 609 to 726 folds into the Response regulatory domain; that stretch reads KVLVMDENGV…NMRNVLSDRL (118 aa). Asp657 is modified (4-aspartylphosphate). Lys711 is covalently cross-linked (Glycyl lysine isopeptide (Lys-Gly) (interchain with G-Cter in ubiquitin)).

Belongs to the ethylene receptor family. As to quaternary structure, homodimer; disulfide-linked. Cu cation serves as cofactor. Activation probably requires a transfer of a phosphate group between a His in the transmitter domain and an Asp of the receiver domain.

Its subcellular location is the endoplasmic reticulum membrane. It carries out the reaction ATP + protein L-histidine = ADP + protein N-phospho-L-histidine.. Functionally, may act early in the ethylene signal transduction pathway, possibly as an ethylene receptor, or as a regulator of the pathway. The sequence is that of Ethylene receptor 1 (ETR1) from Brassica oleracea (Wild cabbage).